Consider the following 712-residue polypeptide: Polyribonucleotide nucleotidyltransferase (712 aa).

Mg(2+) contacts are provided by Asp493 and Asp499. In terms of domain architecture, KH spans 560–619; sequence PRLLTFKVDPEDIGKIIGPGGKMVRSITEATGAKVDISDDGTITVSSSVGGQAEAARAMI. The S1 motif domain maps to 629-697; sequence GQVYLGKVTR…HKGRVNLTRL (69 aa).

Belongs to the polyribonucleotide nucleotidyltransferase family. The cofactor is Mg(2+).

The protein resides in the cytoplasm. It catalyses the reaction RNA(n+1) + phosphate = RNA(n) + a ribonucleoside 5'-diphosphate. Functionally, involved in mRNA degradation. Catalyzes the phosphorolysis of single-stranded polyribonucleotides processively in the 3'- to 5'-direction. In Synechococcus sp. (strain JA-3-3Ab) (Cyanobacteria bacterium Yellowstone A-Prime), this protein is Polyribonucleotide nucleotidyltransferase.